The primary structure comprises 448 residues: Fumarate hydratase class II (448 aa).

Substrate-binding positions include 83–85, 113–116, 123–125, and T171; these read SGT, HPND, and SSN. H172 serves as the catalytic Proton donor/acceptor. Residue S302 is part of the active site. Substrate-binding positions include S303 and 308 to 310; that span reads KVN.

This sequence belongs to the class-II fumarase/aspartase family. Fumarase subfamily. In terms of assembly, homotetramer.

Its subcellular location is the cytoplasm. The enzyme catalyses (S)-malate = fumarate + H2O. Its pathway is carbohydrate metabolism; tricarboxylic acid cycle; (S)-malate from fumarate: step 1/1. Involved in the TCA cycle. Catalyzes the stereospecific interconversion of fumarate to L-malate. In Blochmanniella floridana, this protein is Fumarate hydratase class II.